A 103-amino-acid chain; its full sequence is Large ribosomal subunit protein bL21 (103 aa).

Belongs to the bacterial ribosomal protein bL21 family. Part of the 50S ribosomal subunit. Contacts protein L20.

Its function is as follows. This protein binds to 23S rRNA in the presence of protein L20. The polypeptide is Large ribosomal subunit protein bL21 (Desulfotalea psychrophila (strain LSv54 / DSM 12343)).